The primary structure comprises 718 residues: Probable GTP diphosphokinase RSH2, chloroplastic (718 aa).

The N-terminal 68 residues, Met1–Arg68, are a transit peptide targeting the chloroplast. The segment at Tyr9 to Arg48 is disordered. Low complexity predominate over residues Ser19 to Ala39. Residues Tyr243–Met347 enclose the HD domain.

This sequence belongs to the RelA/SpoT family.

It is found in the plastid. The protein localises to the chloroplast. The catalysed reaction is GTP + ATP = guanosine 3'-diphosphate 5'-triphosphate + AMP. Functionally, probable ppGpp (guanosine 3'-diphosphate 5'-diphosphate) synthetase that may be involved in a rapid plant ppGpp-mediated response to pathogens and other stresses. In Oryza sativa subsp. japonica (Rice), this protein is Probable GTP diphosphokinase RSH2, chloroplastic (RSH2).